We begin with the raw amino-acid sequence, 170 residues long: Adenine phosphoribosyltransferase (170 aa).

It belongs to the purine/pyrimidine phosphoribosyltransferase family. Homodimer.

Its subcellular location is the cytoplasm. It catalyses the reaction AMP + diphosphate = 5-phospho-alpha-D-ribose 1-diphosphate + adenine. Its pathway is purine metabolism; AMP biosynthesis via salvage pathway; AMP from adenine: step 1/1. Its function is as follows. Catalyzes a salvage reaction resulting in the formation of AMP, that is energically less costly than de novo synthesis. In Carboxydothermus hydrogenoformans (strain ATCC BAA-161 / DSM 6008 / Z-2901), this protein is Adenine phosphoribosyltransferase.